The primary structure comprises 339 residues: Serpentine receptor class alpha-22 (339 aa).

6 helical membrane passes run 33–53, 110–130, 150–170, 199–219, 250–270, and 284–304; these read IFIS…IQAL, VVDL…VFSL, FIAI…FYIA, VRTM…YLSV, IFII…NLLL, and IALF…VIYF.

This sequence belongs to the nematode receptor-like protein sra family.

The protein localises to the membrane. This Caenorhabditis elegans protein is Serpentine receptor class alpha-22 (sra-22).